The following is an 87-amino-acid chain: Small ribosomal subunit protein uS17 (87 aa).

It belongs to the universal ribosomal protein uS17 family. As to quaternary structure, part of the 30S ribosomal subunit.

In terms of biological role, one of the primary rRNA binding proteins, it binds specifically to the 5'-end of 16S ribosomal RNA. The polypeptide is Small ribosomal subunit protein uS17 (Hydrogenovibrio crunogenus (strain DSM 25203 / XCL-2) (Thiomicrospira crunogena)).